Reading from the N-terminus, the 327-residue chain is Phenylalanine--tRNA ligase alpha subunit (327 aa).

Residue Glu-252 coordinates Mg(2+).

Belongs to the class-II aminoacyl-tRNA synthetase family. Phe-tRNA synthetase alpha subunit type 1 subfamily. Tetramer of two alpha and two beta subunits. Requires Mg(2+) as cofactor.

The protein resides in the cytoplasm. The catalysed reaction is tRNA(Phe) + L-phenylalanine + ATP = L-phenylalanyl-tRNA(Phe) + AMP + diphosphate + H(+). This is Phenylalanine--tRNA ligase alpha subunit from Pectobacterium carotovorum subsp. carotovorum (strain PC1).